A 41-amino-acid chain; its full sequence is Large ribosomal subunit protein bL36 (41 aa).

The protein belongs to the bacterial ribosomal protein bL36 family.

This chain is Large ribosomal subunit protein bL36, found in Vibrio vulnificus (strain YJ016).